The chain runs to 132 residues: Transcription antitermination protein NusB (132 aa).

It belongs to the NusB family.

Functionally, involved in transcription antitermination. Required for transcription of ribosomal RNA (rRNA) genes. Binds specifically to the boxA antiterminator sequence of the ribosomal RNA (rrn) operons. In Campylobacter jejuni subsp. doylei (strain ATCC BAA-1458 / RM4099 / 269.97), this protein is Transcription antitermination protein NusB.